The primary structure comprises 249 residues: 2,3-bisphosphoglycerate-dependent phosphoglycerate mutase (249 aa).

Residues 9 to 16 (RHGQSQWN), 22 to 23 (TG), R61, 88 to 91 (ERHY), K99, 115 to 116 (RR), and 184 to 185 (GN) contribute to the substrate site. H10 (tele-phosphohistidine intermediate) is an active-site residue. E88 acts as the Proton donor/acceptor in catalysis.

Belongs to the phosphoglycerate mutase family. BPG-dependent PGAM subfamily. As to quaternary structure, homodimer.

It carries out the reaction (2R)-2-phosphoglycerate = (2R)-3-phosphoglycerate. Its pathway is carbohydrate degradation; glycolysis; pyruvate from D-glyceraldehyde 3-phosphate: step 3/5. In terms of biological role, catalyzes the interconversion of 2-phosphoglycerate and 3-phosphoglycerate. This chain is 2,3-bisphosphoglycerate-dependent phosphoglycerate mutase, found in Xanthomonas axonopodis pv. citri (strain 306).